Reading from the N-terminus, the 1222-residue chain is Chitin synthase 4 (1222 aa).

Disordered regions lie at residues 1–101 (MSLP…ERNR) and 138–200 (TERT…KRIE). Composition is skewed to polar residues over residues 11-24 (QAYN…NSPS) and 42-77 (NQAS…SPDG). Basic residues predominate over residues 182-196 (SGKIKRKSRRHSKPP). Helical transmembrane passes span 205–225 (PPTF…GFIM) and 243–263 (MGLI…TFGF). 3 N-linked (GlcNAc...) asparagine glycosylation sites follow: N378, N418, and N440. A helical membrane pass occupies residues 513-533 (ALILSVVGVRFFLAIIFQWFI). The segment at 576-630 (TVYGSSDRSSKRASFLPTTSRFSSVGGPDIRSQGGRRMPTTMASQSTSNQLLTPN) is disordered. A compositionally biased stretch (polar residues) spans 616 to 630 (TMASQSTSNQLLTPN). 2 N-linked (GlcNAc...) asparagine glycosylation sites follow: N637 and N1030. A run of 3 helical transmembrane segments spans residues 1055-1075 (FIIF…AFTF), 1089-1109 (IIPL…VIIT), and 1113-1133 (WSYI…NFVL). The segment at 1202–1222 (GGQTWTSPPGHQYNEEYYSDA) is disordered.

The protein belongs to the chitin synthase family. Class IV subfamily.

The protein localises to the cell membrane. The catalysed reaction is [(1-&gt;4)-N-acetyl-beta-D-glucosaminyl](n) + UDP-N-acetyl-alpha-D-glucosamine = [(1-&gt;4)-N-acetyl-beta-D-glucosaminyl](n+1) + UDP + H(+). Its function is as follows. Polymerizes chitin, a structural polymer of the cell wall and septum, by transferring the sugar moiety of UDP-GlcNAc to the non-reducing end of the growing chitin polymer. Shows additive effects in septum formation with CHS1, CHS2, CHS3A, CHS5, CHS6 and CHS7. Regulates conidiation. Involved in virulence and mediates mycotoxin deoxinivalenol (DON) biosynthesis via the regulation of the expression of TRI4, TRI5 and TRI6. This Gibberella zeae (strain ATCC MYA-4620 / CBS 123657 / FGSC 9075 / NRRL 31084 / PH-1) (Wheat head blight fungus) protein is Chitin synthase 4.